A 281-amino-acid chain; its full sequence is Undecaprenyl-diphosphatase (281 aa).

6 helical membrane-spanning segments follow: residues 90 to 110 (WLVT…QDSI), 113 to 133 (VLRG…VLGA), 147 to 167 (LSWK…IPGV), 191 to 211 (SFLL…YDEL), 217 to 237 (IAWV…YAVI), and 257 to 277 (IAAA…AFQG).

It belongs to the UppP family.

Its subcellular location is the cell membrane. It carries out the reaction di-trans,octa-cis-undecaprenyl diphosphate + H2O = di-trans,octa-cis-undecaprenyl phosphate + phosphate + H(+). Its function is as follows. Catalyzes the dephosphorylation of undecaprenyl diphosphate (UPP). Confers resistance to bacitracin. This chain is Undecaprenyl-diphosphatase, found in Kineococcus radiotolerans (strain ATCC BAA-149 / DSM 14245 / SRS30216).